The sequence spans 214 residues: 3-isopropylmalate dehydratase small subunit (214 aa).

This sequence belongs to the LeuD family. LeuD type 1 subfamily. As to quaternary structure, heterodimer of LeuC and LeuD.

It catalyses the reaction (2R,3S)-3-isopropylmalate = (2S)-2-isopropylmalate. Its pathway is amino-acid biosynthesis; L-leucine biosynthesis; L-leucine from 3-methyl-2-oxobutanoate: step 2/4. Its function is as follows. Catalyzes the isomerization between 2-isopropylmalate and 3-isopropylmalate, via the formation of 2-isopropylmaleate. This Pseudomonas entomophila (strain L48) protein is 3-isopropylmalate dehydratase small subunit.